The sequence spans 210 residues: Synaptosomal-associated protein 23 (210 aa).

The residue at position 1 (Met1) is an N-acetylmethionine. Phosphoserine is present on residues Ser5, Ser20, Ser23, and Ser34. The region spanning 14–76 (HQVTDESLES…REAEKTLTEL (63 aa)) is the t-SNARE coiled-coil homology 1 domain. The stretch at 23–76 (STRRILGLAIESQDAGIKTITMLDEQGEQLNRIEEGMDQINKDMREAEKTLTEL) forms a coiled coil. Residues Cys79, Cys80, Cys83, Cys85, and Cys87 are each lipidated (S-palmitoyl cysteine). The segment at 104–136 (GDGGDSSPSNVVSKQPSRITNGQPQQTTGAASG) is disordered. A compositionally biased stretch (polar residues) spans 109-133 (SSPSNVVSKQPSRITNGQPQQTTGA). Phosphoserine is present on residues Ser110 and Ser160. The t-SNARE coiled-coil homology 2 domain maps to 145-207 (DAREDEMEEN…DIANTRAKKL (63 aa)).

This sequence belongs to the SNAP-25 family. Homotetramer (via coiled-coil domain), also forms heterotetramers with STX4 and VAMP3. Found in a complex with VAMP8 and STX1A. Found in a complex with VAMP8 and STX4 in pancreas. Interacts simultaneously with SNAPIN and SYN4. Interacts with STX1A. Interacts with STX12. Interacts tightly to multiple syntaxins and synaptobrevins/VAMPs. Interacts with ZDHHC13 (via ANK repeats). Interacts with ZDHHC17 (via ANK repeats).

Its subcellular location is the cell membrane. The protein resides in the synapse. It is found in the synaptosome. It localises to the cytoplasmic vesicle membrane. Functionally, essential component of the high affinity receptor for the general membrane fusion machinery and an important regulator of transport vesicle docking and fusion. The sequence is that of Synaptosomal-associated protein 23 (Snap23) from Rattus norvegicus (Rat).